A 118-amino-acid polypeptide reads, in one-letter code: Small ribosomal subunit protein uS13 (118 aa).

The segment at 94–118 (SLPLRGQRTKTNARTRKGPRKPIRK) is disordered.

Belongs to the universal ribosomal protein uS13 family. In terms of assembly, part of the 30S ribosomal subunit. Forms a loose heterodimer with protein S19. Forms two bridges to the 50S subunit in the 70S ribosome.

Functionally, located at the top of the head of the 30S subunit, it contacts several helices of the 16S rRNA. In the 70S ribosome it contacts the 23S rRNA (bridge B1a) and protein L5 of the 50S subunit (bridge B1b), connecting the 2 subunits; these bridges are implicated in subunit movement. Contacts the tRNAs in the A and P-sites. The polypeptide is Small ribosomal subunit protein uS13 (Shewanella halifaxensis (strain HAW-EB4)).